Here is a 249-residue protein sequence, read N- to C-terminus: Molybdate/tungstate transport system permease protein WtpB (249 aa).

At 1–10 (MDRRDYLAYA) the chain is on the cytoplasmic side. A helical membrane pass occupies residues 11–31 (FAGLGAFLVAFIGLPLFMIFI). Topologically, residues 32-56 (KQAYDLEALQRTLVDPLVIESIRNS) are extracellular. In terms of domain architecture, ABC transmembrane type-1 spans 53-239 (IRNSLFTATV…TISLAVFIFL (187 aa)). Residues 57–77 (LFTATVSTLLGILFGVPLGYV) form a helical membrane-spanning segment. The Cytoplasmic segment spans residues 78–96 (LARKEFKGKNFVQALIDTP). Residues 97-117 (IVIPHSVVGIMLLVTFSDAIL) form a helical membrane-spanning segment. A topological domain (extracellular) is located at residue Asp-118. A helical membrane pass occupies residues 119-139 (NYKGIVAVMLFVSSPFIVNSA). At 140 to 179 (RDGFLSVDEKLEYVARTLGASGLRTFFSVTLPNAIHSIAS) the chain is on the cytoplasmic side. The helical transmembrane segment at 180–200 (GAIMAWARAISEVGAILIVAY) threads the bilayer. Topologically, residues 201–223 (YPKTAQVLIMEYFNNYGLRASRP) are extracellular. Residues 224-244 (IAVILVTISLAVFIFLRWLVG) traverse the membrane as a helical segment. Residues 245-249 (RGRNA) lie on the Cytoplasmic side of the membrane.

Belongs to the binding-protein-dependent transport system permease family. As to quaternary structure, the complex is composed of two ATP-binding proteins (WtpC), two transmembrane proteins (WtpB) and a solute-binding protein (WtpA).

The protein resides in the cell membrane. In terms of biological role, part of the ABC transporter complex WtpABC involved in molybdate/tungstate import. Probably responsible for the translocation of the substrate across the membrane. The sequence is that of Molybdate/tungstate transport system permease protein WtpB from Pyrococcus furiosus (strain ATCC 43587 / DSM 3638 / JCM 8422 / Vc1).